The chain runs to 214 residues: GTP-binding nuclear protein GSP1/Ran (214 aa).

In terms of domain architecture, Small GTPase Ran-type spans 4-168 (EVAAFKLVLV…LWLARKLAGN (165 aa)). Residue 15 to 22 (DGGTGKTT) coordinates GTP. The interval 34 to 42 (NRYNATLGV) is switch-I. Residues glycine 65, 119–122 (NKVD), and 147–149 (SAK) contribute to the GTP site. The tract at residues 65–81 (GQEKFGGLRDGYYINGQ) is switch-II.

This sequence belongs to the small GTPase superfamily. Ran family. As to quaternary structure, found in a nuclear export complex with RanGTP, exportin and pre-miRNA.

Its subcellular location is the nucleus. GTP-binding protein involved in nucleocytoplasmic transport. Required for the import of protein into the nucleus and also for RNA export. Involved in chromatin condensation and control of cell cycle. This is GTP-binding nuclear protein GSP1/Ran (GSP1) from Yarrowia lipolytica (strain CLIB 122 / E 150) (Yeast).